The primary structure comprises 135 residues: Succinate dehydrogenase assembly factor 2, mitochondrial (135 aa).

Belongs to the SDHAF2 family. In terms of assembly, interacts with the flavoprotein subunit within the SDH catalytic dimer.

Its subcellular location is the mitochondrion matrix. Plays an essential role in the assembly of succinate dehydrogenase (SDH), an enzyme complex (also referred to as respiratory complex II) that is a component of both the tricarboxylic acid (TCA) cycle and the mitochondrial electron transport chain, and which couples the oxidation of succinate to fumarate with the reduction of ubiquinone (coenzyme Q) to ubiquinol. Required for flavinylation (covalent attachment of FAD) of the flavoprotein subunit of the SDH catalytic dimer. This chain is Succinate dehydrogenase assembly factor 2, mitochondrial, found in Meyerozyma guilliermondii (strain ATCC 6260 / CBS 566 / DSM 6381 / JCM 1539 / NBRC 10279 / NRRL Y-324) (Yeast).